Here is a 545-residue protein sequence, read N- to C-terminus: Chaperonin GroEL (545 aa).

Residues 29 to 32 (TLGP), lysine 50, 86 to 90 (DGTTT), glycine 413, and aspartate 495 each bind ATP.

Belongs to the chaperonin (HSP60) family. Forms a cylinder of 14 subunits composed of two heptameric rings stacked back-to-back. Interacts with the co-chaperonin GroES.

It is found in the cytoplasm. The enzyme catalyses ATP + H2O + a folded polypeptide = ADP + phosphate + an unfolded polypeptide.. In terms of biological role, together with its co-chaperonin GroES, plays an essential role in assisting protein folding. The GroEL-GroES system forms a nano-cage that allows encapsulation of the non-native substrate proteins and provides a physical environment optimized to promote and accelerate protein folding. This Borreliella afzelii (strain PKo) (Borrelia afzelii) protein is Chaperonin GroEL.